Here is a 318-residue protein sequence, read N- to C-terminus: Pantothenate kinase (318 aa).

96 to 103 (GSVAVGKS) lines the ATP pocket.

It belongs to the prokaryotic pantothenate kinase family.

The protein resides in the cytoplasm. The catalysed reaction is (R)-pantothenate + ATP = (R)-4'-phosphopantothenate + ADP + H(+). It participates in cofactor biosynthesis; coenzyme A biosynthesis; CoA from (R)-pantothenate: step 1/5. The protein is Pantothenate kinase of Coxiella burnetii (strain CbuK_Q154) (Coxiella burnetii (strain Q154)).